The sequence spans 94 residues: Aspartyl/glutamyl-tRNA(Asn/Gln) amidotransferase subunit C (94 aa).

It belongs to the GatC family. In terms of assembly, heterotrimer of A, B and C subunits.

It carries out the reaction L-glutamyl-tRNA(Gln) + L-glutamine + ATP + H2O = L-glutaminyl-tRNA(Gln) + L-glutamate + ADP + phosphate + H(+). The catalysed reaction is L-aspartyl-tRNA(Asn) + L-glutamine + ATP + H2O = L-asparaginyl-tRNA(Asn) + L-glutamate + ADP + phosphate + 2 H(+). Allows the formation of correctly charged Asn-tRNA(Asn) or Gln-tRNA(Gln) through the transamidation of misacylated Asp-tRNA(Asn) or Glu-tRNA(Gln) in organisms which lack either or both of asparaginyl-tRNA or glutaminyl-tRNA synthetases. The reaction takes place in the presence of glutamine and ATP through an activated phospho-Asp-tRNA(Asn) or phospho-Glu-tRNA(Gln). This is Aspartyl/glutamyl-tRNA(Asn/Gln) amidotransferase subunit C from Solidesulfovibrio magneticus (strain ATCC 700980 / DSM 13731 / RS-1) (Desulfovibrio magneticus).